The primary structure comprises 146 residues: Hemoglobin subunit beta-A/B (146 aa).

An N-acetylserine; in variant beta-B modification is found at Gly-1. One can recognise a Globin domain in the interval 2-146 (FLTAEEKGLV…VANALAHKYH (145 aa)). A Phosphoserine modification is found at Ser-44. Lys-59 is modified (N6-acetyllysine). Heme b is bound at residue His-63. Lys-82 carries the post-translational modification N6-acetyllysine. His-92 lines the heme b pocket. S-nitrosocysteine is present on Cys-93. Lys-144 is subject to N6-acetyllysine.

Belongs to the globin family. Heterotetramer of two alpha chains and two beta chains. In terms of tissue distribution, red blood cells.

In terms of biological role, involved in oxygen transport from the lung to the various peripheral tissues. In Felis catus (Cat), this protein is Hemoglobin subunit beta-A/B (HBB).